We begin with the raw amino-acid sequence, 280 residues long: Myelin proteolipid protein A (280 aa).

Topologically, residues 1 to 10 (MGWHDGCIRC) are cytoplasmic. 2 S-palmitoyl cysteine lipidation sites follow: cysteine 7 and cysteine 10. A helical membrane pass occupies residues 11 to 36 (MVGVPFASVIATVLCFAGVALFCGCG). The Extracellular segment spans residues 37–59 (HEALSGTEKLIETYFSKNYQEYE). Residues 60 to 88 (YLIHVINAFQYVIYGIAIFFFLFGILLLA) traverse the membrane as a helical segment. Topologically, residues 89–152 (EGFYTTTAIK…LGKWLGHPDK (64 aa)) are cytoplasmic. 2 S-palmitoyl cysteine lipidation sites follow: cysteine 140 and cysteine 142. Residues 153 to 179 (FVGVTYIITILWILIFACSAVPVYIYF) form a helical membrane-spanning segment. The Extracellular segment spans residues 180–239 (NTWVTCQSIAFPGKTTTSVSTLCSDARMYGVLPWNAFPGKVCGTSLLAICKTSEFQMTFH). 2 disulfide bridges follow: cysteine 185–cysteine 229 and cysteine 202–cysteine 221. Residues 240-269 (LFIAAFVGAAATLVALLTYMVGASFNYAVL) form a helical membrane-spanning segment. The Cytoplasmic segment spans residues 270–280 (RVTGRSDRSKF).

Belongs to the myelin proteolipid protein family.

The protein resides in the cell membrane. Its function is as follows. This is the major myelin protein from the central nervous system. It plays an important role in the formation or maintenance of the multilamellar structure of myelin. This Xenopus laevis (African clawed frog) protein is Myelin proteolipid protein A (plp1-a).